The sequence spans 329 residues: MLSLKSEVLARHLPLFNGKSILLFGNVRDRFADQIRSISSHVAIFSHYFDYARHYNDVEFGLDCTTPANLGVFYWTKNKQECHYQLLQWLSQTAIGQQMLIIGENRAGVRSVEKLLSPFGQIAKIDSARRCGLYHFELQTIPQFDCQKFWKSYRLADLTVLSLPAAFSSTELDAGSQLLLSSFTNQDRLTGNVLDLGCGAGVIGAYLKQRFPAISLTMSDIHSMAIHSAQATLAKNKLTGTVIASDVFSHINDRFDLIVSNPPFHDDIDTAYHTVESLIMQAKNHLNYGGELRIVANAFLPYPDLLDKAFGSHQVVTKSNKFKVYSARV.

This sequence belongs to the methyltransferase superfamily. RsmC family. In terms of assembly, monomer.

It is found in the cytoplasm. It catalyses the reaction guanosine(1207) in 16S rRNA + S-adenosyl-L-methionine = N(2)-methylguanosine(1207) in 16S rRNA + S-adenosyl-L-homocysteine + H(+). In terms of biological role, specifically methylates the guanine in position 1207 of 16S rRNA in the 30S particle. This chain is Ribosomal RNA small subunit methyltransferase C, found in Haemophilus ducreyi (strain 35000HP / ATCC 700724).